A 536-amino-acid polypeptide reads, in one-letter code: Apoptosis inhibitor 5 homolog (536 aa).

The interval 462–536 is disordered; the sequence is ITFGEKAAAN…GYRNRRFNKY (75 aa). The segment covering 472–487 has biased composition (basic and acidic residues); the sequence is GKDKDQEPEKKSRPSN. Residues 498 to 507 are compositionally biased toward polar residues; that stretch reads KYSNKVNQSY. The span at 516 to 528 shows a compositional bias: gly residues; sequence RGGGGGGGSGGGY.

It belongs to the API5 family.

The protein resides in the nucleus. Its function is as follows. Antiapoptotic factor. Also known to efficiently suppress E2F1-induced apoptosis. The sequence is that of Apoptosis inhibitor 5 homolog from Drosophila melanogaster (Fruit fly).